Consider the following 80-residue polypeptide: MPKKNEAPASFETALGELEQIVNRLESGDLPLEEALSEFERGVQLARQGQSQLQKAEQRVQILLADSEDSPTTPFTPDAE.

Belongs to the XseB family. In terms of assembly, heterooligomer composed of large and small subunits.

The protein resides in the cytoplasm. The enzyme catalyses Exonucleolytic cleavage in either 5'- to 3'- or 3'- to 5'-direction to yield nucleoside 5'-phosphates.. In terms of biological role, bidirectionally degrades single-stranded DNA into large acid-insoluble oligonucleotides, which are then degraded further into small acid-soluble oligonucleotides. This Klebsiella pneumoniae (strain 342) protein is Exodeoxyribonuclease 7 small subunit.